The following is a 142-amino-acid chain: MVLSANDKSNVKAVFAKIGGQAGDLGGEALERLFITYPQTKTYFPHFDLSHGSAQIKGHGKKVAEALVEAANHIDDIAGALSKLSDLHAQKLRVDPVNFKLLGHCFLVVVAVHFPSLLTPEVHASLDKFVLAVGTVLTAKYR.

The 141-residue stretch at 2–142 (VLSANDKSNV…VGTVLTAKYR (141 aa)) folds into the Globin domain. His-59 is an O2 binding site. His-88 is a heme b binding site.

Belongs to the globin family. In terms of assembly, heterotetramer of two alpha chains and two beta chains. As to expression, red blood cells.

Involved in oxygen transport from the lung to the various peripheral tissues. This chain is Hemoglobin subunit alpha-A (HBAA), found in Columba livia (Rock dove).